Here is a 278-residue protein sequence, read N- to C-terminus: Large ribosomal subunit protein uL2 (278 aa).

The segment at 224-278 (VAMNPVDHPHGGGEGRTSGGRNPVTPWGVPTKGKKTRSNKRTDTFILSSRHNRKK) is disordered.

This sequence belongs to the universal ribosomal protein uL2 family. As to quaternary structure, part of the 50S ribosomal subunit. Forms a bridge to the 30S subunit in the 70S ribosome.

One of the primary rRNA binding proteins. Required for association of the 30S and 50S subunits to form the 70S ribosome, for tRNA binding and peptide bond formation. It has been suggested to have peptidyltransferase activity; this is somewhat controversial. Makes several contacts with the 16S rRNA in the 70S ribosome. The chain is Large ribosomal subunit protein uL2 from Methylorubrum extorquens (strain CM4 / NCIMB 13688) (Methylobacterium extorquens).